A 397-amino-acid polypeptide reads, in one-letter code: UDP-GlcNAc:betaGal beta-1,3-N-acetylglucosaminyltransferase 8 (397 aa).

Residues 1 to 6 lie on the Cytoplasmic side of the membrane; sequence MRCPKC. Residues 7–23 traverse the membrane as a helical; Signal-anchor for type II membrane protein segment; it reads LLCLSALLTLLGLKVYI. Residues 24-397 are Lumenal-facing; sequence EWTSESRLSK…KQLQDPRLQC (374 aa). Positions 33–58 are disordered; sequence KAYPSPRGTPPSPTPANPEPTLPANL. Residues 39–53 show a composition bias toward pro residues; sequence RGTPPSPTPANPEPT. Asn-57 is a glycosylation site (N-linked (GlcNAc...) asparagine).

It belongs to the glycosyltransferase 31 family. As to quaternary structure, interacts with B3GNT2; this interaction greatly increases B3GNT2 catalytic activity, independently of B3GNT8 enzymatic activity. Highly expressed in small intestine, pancreas, spleen, bone marrow, lung, throat, and ileum, and weakly in fetal brain, cerebellum, heart, liver, tongue, breast, uteri, and testis. Not detected in colon. Differentially expressed in human tumor cell lines.

Its subcellular location is the golgi apparatus membrane. It participates in protein modification; protein glycosylation. Its function is as follows. Beta-1,3-N-acetylglucosaminyltransferase that plays a role in the elongation of specific branch structures of multiantennary N-glycans. Has strong activity towards tetraantennary N-glycans and 2,6 triantennary glycans. The protein is UDP-GlcNAc:betaGal beta-1,3-N-acetylglucosaminyltransferase 8 of Homo sapiens (Human).